Consider the following 173-residue polypeptide: NADH-ubiquinone oxidoreductase chain 6 (173 aa).

Transmembrane regions (helical) follow at residues 24-44 (AMGL…GMFV), 47-67 (FWFS…LFIY), 81-101 (MKLF…SFFF), and 142-162 (LITL…VKIT).

This sequence belongs to the complex I subunit 6 family.

The protein localises to the mitochondrion membrane. The catalysed reaction is a ubiquinone + NADH + 5 H(+)(in) = a ubiquinol + NAD(+) + 4 H(+)(out). In terms of biological role, core subunit of the mitochondrial membrane respiratory chain NADH dehydrogenase (Complex I) that is believed to belong to the minimal assembly required for catalysis. Complex I functions in the transfer of electrons from NADH to the respiratory chain. The immediate electron acceptor for the enzyme is believed to be ubiquinone. This Aedes aegypti (Yellowfever mosquito) protein is NADH-ubiquinone oxidoreductase chain 6.